A 333-amino-acid chain; its full sequence is Probable tRNA pseudouridine synthase B (333 aa).

Residue Asp66 is the Nucleophile of the active site. The PUA domain maps to Leu233–Met308.

Belongs to the pseudouridine synthase TruB family. Type 2 subfamily.

The enzyme catalyses uridine(55) in tRNA = pseudouridine(55) in tRNA. In terms of biological role, could be responsible for synthesis of pseudouridine from uracil-55 in the psi GC loop of transfer RNAs. The chain is Probable tRNA pseudouridine synthase B from Methanococcus maripaludis (strain C7 / ATCC BAA-1331).